We begin with the raw amino-acid sequence, 87 residues long: DNA-directed RNA polymerase subunit omega (87 aa).

It belongs to the RNA polymerase subunit omega family. The RNAP catalytic core consists of 2 alpha, 1 beta, 1 beta' and 1 omega subunit. When a sigma factor is associated with the core the holoenzyme is formed, which can initiate transcription.

It carries out the reaction RNA(n) + a ribonucleoside 5'-triphosphate = RNA(n+1) + diphosphate. In terms of biological role, promotes RNA polymerase assembly. Latches the N- and C-terminal regions of the beta' subunit thereby facilitating its interaction with the beta and alpha subunits. This chain is DNA-directed RNA polymerase subunit omega, found in Azotobacter vinelandii (strain DJ / ATCC BAA-1303).